The primary structure comprises 376 residues: Acetate kinase (376 aa).

Asn-7 is a binding site for Mg(2+). An ATP-binding site is contributed by Lys-14. Arg-71 is a substrate binding site. The active-site Proton donor/acceptor is the Asp-128. ATP contacts are provided by residues 188 to 192 (HLGNG), 262 to 264 (DFR), and 310 to 314 (GVGEN). Glu-364 is a binding site for Mg(2+).

Belongs to the acetokinase family. As to quaternary structure, homodimer. Mg(2+) serves as cofactor. The cofactor is Mn(2+).

It localises to the cytoplasm. The catalysed reaction is acetate + ATP = acetyl phosphate + ADP. The protein operates within metabolic intermediate biosynthesis; acetyl-CoA biosynthesis; acetyl-CoA from acetate: step 1/2. In terms of biological role, catalyzes the formation of acetyl phosphate from acetate and ATP. Can also catalyze the reverse reaction. This Mycolicibacterium smegmatis (strain ATCC 700084 / mc(2)155) (Mycobacterium smegmatis) protein is Acetate kinase.